Consider the following 267-residue polypeptide: L-aspartate dehydrogenase (267 aa).

The NAD(+) site is built by alanine 124 and asparagine 190. Histidine 220 is a catalytic residue.

It belongs to the L-aspartate dehydrogenase family.

The catalysed reaction is L-aspartate + NADP(+) + H2O = oxaloacetate + NH4(+) + NADPH + H(+). It carries out the reaction L-aspartate + NAD(+) + H2O = oxaloacetate + NH4(+) + NADH + H(+). It participates in cofactor biosynthesis; NAD(+) biosynthesis; iminoaspartate from L-aspartate (dehydrogenase route): step 1/1. Specifically catalyzes the NAD or NADP-dependent dehydrogenation of L-aspartate to iminoaspartate. This Polaromonas sp. (strain JS666 / ATCC BAA-500) protein is L-aspartate dehydrogenase.